A 248-amino-acid polypeptide reads, in one-letter code: PF03932 family protein CutC (248 aa).

It belongs to the CutC family.

It localises to the cytoplasm. In Porphyromonas gingivalis (strain ATCC BAA-308 / W83), this protein is PF03932 family protein CutC.